Reading from the N-terminus, the 252-residue chain is Putative endonuclease C1F12.06c (252 aa).

The Mg(2+) site is built by Asp-43 and Asp-114.

The protein belongs to the endonuclease V family.

It localises to the cytoplasm. It is found in the nucleus. The chain is Putative endonuclease C1F12.06c from Schizosaccharomyces pombe (strain 972 / ATCC 24843) (Fission yeast).